A 1931-amino-acid polypeptide reads, in one-letter code: MQKDYMKLHSNSDFDADQLDEHDDNVFQDVYDTGFDDGYIKANQENLIANQYKKLDKNSYQNGNNSFYTKDELEKLKKQSFQVNQDIDYYQQAQTEISSERQRLLQAIDDLEANQDQFHPEDFQAERQYLINELDRLDSELYHIEQYKNDSIDFVNELNQRLSAEQAKIDSYNSSLDKNIRKDYIQIDQLKNKLAEETTEYNDLLNRSTDEISEIDRQSERLQNLIDERIAKLNNDSYGVSSLDSSTRERLKKEIHDLSEQRKKLQSAKKLHLYNLNLKKESIRRYRSQLEQYLESLKQMRNEHNKKLKGYAQNLDNIKNEVEKAKQNFNDQQLKILQSKANADQYFALRKIELENSYKKAKNAILEANKAHAKNVQEEQALANKNNKTQRLLNKLKEDYDRLKIASLSFESMRKQSLAALNNLQDELKQKHNLLERKKHEQDGIVNEKISELEGYRSDLVDQKLKIEREKENQERRYKAAEASLNKKRQEIDELFLEANTKLNEASLKENDLNNQKREILAKLRNLEHLKSEIDQRRRDLDQRELIDQQTIRKIQLDVESERADLQRILLIERKKNDERQQELLQYERDIKRQQTDFENTVNWEQKKLSQREKELKDGYEQLQLKQSEVQEKIDELNEEINRAQKSKQNSLVLEQKLKSDLEHLNLSKNYLDKQQEELNQKSDKMIEDLKVFERDLKRQKEDLSIYEKSLQQKEASLINFQNDVTVQKNEAYHKAQAIHQELELKKAAIENELRKLTAERKAVDADKEENTKLKKFIDEEIRSLANERKELEIYQNNIENFKNNAVDRLNVLESDLVKKRNELEQLKKEQQTHYNELNSNLTNELQELEEQKKKFAHQKQQKFEELLQAKNNLSIKENELVLYAQKVNDRYNELKAIEKSNTAKSEMINAKLEEFKHAEIDYLNYQNKIKQEQIKFDNQVKILESQYNQRNEILLIREEQIKQKKAEQQAQEKQIQKDFKRLQEEKNNFDDQKRNKFNKISNLYLEIKKQRDEVDLAQRQIEDQKEELLIKAREGRLQKQEIEDRLAVLEKSEKRFRQEDELLAKKRIDLIERIGVLKADINKKHEILSLRSVQLTEKAKKQQEKDADLQRKFDLLESEVERFNEEKKSEFQKLKVERDKLAHREKNVSKNMNEINLALAKLDLIRKNNKVDKAKINEKLALLNDQKEKIDRENDLLDAKKTEVITRLRKMENDLEFEKQKVLLDRSNIERISSDQQALARELETKYQTLEREKRSFSQRKENELKEIDDFYQQVQHKERTLNLKIEDLKQLRYLLEKESYNVNVNKKDLKVRIEHYQRLERAIKNEQHKLNNQKNNFFNKVELLNDQLNKKSSKIALLRSKIYNTYKQQQQQKQILLEEKHKNSQLRKSLLKTQEELHQQKAQFSIAKKQEEKKLKNQKDLIQNTLSEVIKQKDQITNIKQEVDLKQTQLNNLEKLIIKQRADLQKELEKNSENTYRLQKAERLLEEKKTKLRLEYDKAKKVLSTAKATDQALKTKQAKVQDQFKKLVLINKKIIEARNNLLKQRNIIQKEINNRNMANFQNPYPNFLNLAPNTQVVPAQTIMPVQTPQLVGVNYPNQPAFDFNNPLMQMQQLINQQQMLMMQKEHQWALEEANKKNSRLAKQLKQLKHHKQALTESTSEHLNYHNLLNADNSYKINSLQNLLSKVAYNTKRRINQLEHNLDPETADLNQLHELNANSQLLDEIRTVLSNTTTNTNAVVPANSYSKELRMLFDEIKADFKKQAVLFNTQKEVFTNQINQLAQAVEQGPIEVRKTLESQDQKYQQMFDNFRDAYEQNISLLRNENNEVQKKLTDLYDEIAAIKTNTEKIKKTTLRPEVRNNANEGLASFNSVNRDKKDYLDQTLPVHQNLRIDLNQNRDLSHAKKERINQLANEIKTIKELIEKRKQTSL.

Coiled coils occupy residues 1626–1659 (KEHQWALEEANKKNSRLAKQLKQLKHHKQALTES), 1768–1846 (FNTQ…IKTN), and 1903–1930 (HAKKERINQLANEIKTIKELIEKRKQTS).

Its function is as follows. Component of the cytoskeleton-like structure which stabilizes the shape of the wall-less Mycoplasma. This cytoskeleton-like network of accessory proteins containing HMW proteins 1 to 5 allows the proper anchoring of cytadhesin proteins in the mycoplasmal membrane at the attachment organelle. In Mycoplasmoides gallisepticum (strain R(low / passage 15 / clone 2)) (Mycoplasma gallisepticum), this protein is Cytadherence high molecular weight protein 2 (hlp2).